Here is a 665-residue protein sequence, read N- to C-terminus: Macrolide export ATP-binding/permease protein MacB (665 aa).

An ABC transporter domain is found at 17-255 (MQVKGLIREF…VAQFSSIIDK (239 aa)). 53 to 60 (GQSGSGKS) is an ATP binding site. Transmembrane regions (helical) follow at residues 287–307 (LLTM…VGLG), 544–564 (IAII…LVSV), 588–608 (FLIE…GMAF), and 630–650 (SIIA…FLPA).

This sequence belongs to the ABC transporter superfamily. Macrolide exporter (TC 3.A.1.122) family. In terms of assembly, homodimer. Part of the tripartite efflux system MacAB-TolC, which is composed of an inner membrane transporter, MacB, a periplasmic membrane fusion protein, MacA, and an outer membrane component, TolC. The complex forms a large protein conduit and can translocate molecules across both the inner and outer membranes. Interacts with MacA.

The protein localises to the cell inner membrane. Functionally, part of the tripartite efflux system MacAB-TolC. MacB is a non-canonical ABC transporter that contains transmembrane domains (TMD), which form a pore in the inner membrane, and an ATP-binding domain (NBD), which is responsible for energy generation. Confers resistance against macrolides. The polypeptide is Macrolide export ATP-binding/permease protein MacB (Psychrobacter arcticus (strain DSM 17307 / VKM B-2377 / 273-4)).